Here is a 129-residue protein sequence, read N- to C-terminus: Small ribosomal subunit protein uS11 (129 aa).

The protein belongs to the universal ribosomal protein uS11 family. In terms of assembly, part of the 30S ribosomal subunit. Interacts with proteins S7 and S18. Binds to IF-3.

Functionally, located on the platform of the 30S subunit, it bridges several disparate RNA helices of the 16S rRNA. Forms part of the Shine-Dalgarno cleft in the 70S ribosome. This Levilactobacillus brevis (strain ATCC 367 / BCRC 12310 / CIP 105137 / JCM 1170 / LMG 11437 / NCIMB 947 / NCTC 947) (Lactobacillus brevis) protein is Small ribosomal subunit protein uS11.